Here is a 284-residue protein sequence, read N- to C-terminus: 2-dehydro-3-deoxyphosphooctonate aldolase (284 aa).

It belongs to the KdsA family.

The protein resides in the cytoplasm. The enzyme catalyses D-arabinose 5-phosphate + phosphoenolpyruvate + H2O = 3-deoxy-alpha-D-manno-2-octulosonate-8-phosphate + phosphate. Its pathway is carbohydrate biosynthesis; 3-deoxy-D-manno-octulosonate biosynthesis; 3-deoxy-D-manno-octulosonate from D-ribulose 5-phosphate: step 2/3. The protein operates within bacterial outer membrane biogenesis; lipopolysaccharide biosynthesis. The sequence is that of 2-dehydro-3-deoxyphosphooctonate aldolase from Edwardsiella ictaluri (strain 93-146).